The following is a 344-amino-acid chain: S-adenosylmethionine:tRNA ribosyltransferase-isomerase (344 aa).

The protein belongs to the QueA family. As to quaternary structure, monomer.

The protein resides in the cytoplasm. The enzyme catalyses 7-aminomethyl-7-carbaguanosine(34) in tRNA + S-adenosyl-L-methionine = epoxyqueuosine(34) in tRNA + adenine + L-methionine + 2 H(+). It participates in tRNA modification; tRNA-queuosine biosynthesis. Transfers and isomerizes the ribose moiety from AdoMet to the 7-aminomethyl group of 7-deazaguanine (preQ1-tRNA) to give epoxyqueuosine (oQ-tRNA). This is S-adenosylmethionine:tRNA ribosyltransferase-isomerase from Levilactobacillus brevis (strain ATCC 367 / BCRC 12310 / CIP 105137 / JCM 1170 / LMG 11437 / NCIMB 947 / NCTC 947) (Lactobacillus brevis).